The sequence spans 345 residues: Phosphoribosylformylglycinamidine cyclo-ligase (345 aa).

This sequence belongs to the AIR synthase family.

The protein resides in the cytoplasm. It catalyses the reaction 2-formamido-N(1)-(5-O-phospho-beta-D-ribosyl)acetamidine + ATP = 5-amino-1-(5-phospho-beta-D-ribosyl)imidazole + ADP + phosphate + H(+). It participates in purine metabolism; IMP biosynthesis via de novo pathway; 5-amino-1-(5-phospho-D-ribosyl)imidazole from N(2)-formyl-N(1)-(5-phospho-D-ribosyl)glycinamide: step 2/2. In Shewanella amazonensis (strain ATCC BAA-1098 / SB2B), this protein is Phosphoribosylformylglycinamidine cyclo-ligase.